The following is a 91-amino-acid chain: Large ribosomal subunit protein bL28 (91 aa).

It belongs to the bacterial ribosomal protein bL28 family.

The sequence is that of Large ribosomal subunit protein bL28 from Protochlamydia amoebophila (strain UWE25).